The sequence spans 73 residues: Translation initiation factor IF-1 (73 aa).

The 73-residue stretch at 1-73 (MANKEELIEF…SKGRITYRAR (73 aa)) folds into the S1-like domain.

This sequence belongs to the IF-1 family. Component of the 30S ribosomal translation pre-initiation complex which assembles on the 30S ribosome in the order IF-2 and IF-3, IF-1 and N-formylmethionyl-tRNA(fMet); mRNA recruitment can occur at any time during PIC assembly.

It is found in the cytoplasm. In terms of biological role, one of the essential components for the initiation of protein synthesis. Stabilizes the binding of IF-2 and IF-3 on the 30S subunit to which N-formylmethionyl-tRNA(fMet) subsequently binds. Helps modulate mRNA selection, yielding the 30S pre-initiation complex (PIC). Upon addition of the 50S ribosomal subunit IF-1, IF-2 and IF-3 are released leaving the mature 70S translation initiation complex. The chain is Translation initiation factor IF-1 from Acinetobacter baylyi (strain ATCC 33305 / BD413 / ADP1).